We begin with the raw amino-acid sequence, 347 residues long: Selenide, water dikinase (347 aa).

Residue Cys17 is part of the active site. ATP-binding positions include Lys20 and 48-50; that span reads TRD. Position 51 (Asp51) interacts with Mg(2+). Residues Asp68, Asp91, and 139–141 each bind ATP; that span reads GHS. Position 91 (Asp91) interacts with Mg(2+). Mg(2+) is bound at residue Asp227.

The protein belongs to the selenophosphate synthase 1 family. Class I subfamily. Homodimer. The cofactor is Mg(2+).

It carries out the reaction hydrogenselenide + ATP + H2O = selenophosphate + AMP + phosphate + 2 H(+). Its function is as follows. Synthesizes selenophosphate from selenide and ATP. The protein is Selenide, water dikinase of Escherichia coli O157:H7.